Reading from the N-terminus, the 281-residue chain is Putative pyruvate, phosphate dikinase regulatory protein (281 aa).

150-157 provides a ligand contact to ADP; sequence GVSRTSKT.

This sequence belongs to the pyruvate, phosphate/water dikinase regulatory protein family. PDRP subfamily.

It catalyses the reaction N(tele)-phospho-L-histidyl/L-threonyl-[pyruvate, phosphate dikinase] + ADP = N(tele)-phospho-L-histidyl/O-phospho-L-threonyl-[pyruvate, phosphate dikinase] + AMP + H(+). The catalysed reaction is N(tele)-phospho-L-histidyl/O-phospho-L-threonyl-[pyruvate, phosphate dikinase] + phosphate + H(+) = N(tele)-phospho-L-histidyl/L-threonyl-[pyruvate, phosphate dikinase] + diphosphate. In terms of biological role, bifunctional serine/threonine kinase and phosphorylase involved in the regulation of the pyruvate, phosphate dikinase (PPDK) by catalyzing its phosphorylation/dephosphorylation. In Sorangium cellulosum (strain So ce56) (Polyangium cellulosum (strain So ce56)), this protein is Putative pyruvate, phosphate dikinase regulatory protein.